The following is a 546-amino-acid chain: MAKEIKFSDSARNLLFEGVRQLHDAVKVTMGPRGRNVLIQKSYGAPSITKDGVSVAKEIELSCPVANMGAQLVKEVASKTADAAGDGTTTATVLAYSIFKEGLRNITAGANPIEVKRGMDKAAEAIINELKKASKKVGGKEEITQVATISANSDHNIGKLIADAMEKVGKDGVITVEEAKGIEDELDVVEGMQFDRGYLSPYFVTNAEKMTAQLDNAYILLTDKKISSMKDILPLLEKTMKEGKPLLIIAEDIEGEALTTLVVNKLRGVLNIAAVKAPGFGDRRKEMLKDIAILTGGQVISEELGLSLENAEVEFLGKAGRIVIDKDNTTIVDGKGHSDDVKDRVAQIKTQIASTTSDYDKEKLQERLAKLSGGVAVIKVGAASEVEMKEKKDRVDDALSATKAAVEEGIVIGGGAALIRAAQKVHLNLHDDEKVGYEIIMRAIKAPLAQIAINAGYDGGVVVNEVQKHEGHFGFNASNGKYVDMFKEGIIDPLKVERIALQNAVSVSSLLLTTEATVHEIKEEKAAPAMPDMGGMGGMGGMGGMM.

ATP is bound by residues 29 to 32 (TMGP), Lys50, 86 to 90 (DGTTT), Gly414, and Asp492.

It belongs to the chaperonin (HSP60) family. As to quaternary structure, forms a cylinder of 14 subunits composed of two heptameric rings stacked back-to-back. Interacts with the co-chaperonin GroES.

It is found in the cytoplasm. It catalyses the reaction ATP + H2O + a folded polypeptide = ADP + phosphate + an unfolded polypeptide.. Its function is as follows. Together with its co-chaperonin GroES, plays an essential role in assisting protein folding. The GroEL-GroES system forms a nano-cage that allows encapsulation of the non-native substrate proteins and provides a physical environment optimized to promote and accelerate protein folding. The polypeptide is Chaperonin GroEL (Helicobacter pylori (strain J99 / ATCC 700824) (Campylobacter pylori J99)).